Reading from the N-terminus, the 184-residue chain is Crossover junction endodeoxyribonuclease RuvC (184 aa).

Residues Asp11, Glu73, and Asp147 contribute to the active site. Asp11, Glu73, and Asp147 together coordinate Mg(2+).

The protein belongs to the RuvC family. In terms of assembly, homodimer which binds Holliday junction (HJ) DNA. The HJ becomes 2-fold symmetrical on binding to RuvC with unstacked arms; it has a different conformation from HJ DNA in complex with RuvA. In the full resolvosome a probable DNA-RuvA(4)-RuvB(12)-RuvC(2) complex forms which resolves the HJ. Mg(2+) serves as cofactor.

The protein localises to the cytoplasm. The catalysed reaction is Endonucleolytic cleavage at a junction such as a reciprocal single-stranded crossover between two homologous DNA duplexes (Holliday junction).. Its function is as follows. The RuvA-RuvB-RuvC complex processes Holliday junction (HJ) DNA during genetic recombination and DNA repair. Endonuclease that resolves HJ intermediates. Cleaves cruciform DNA by making single-stranded nicks across the HJ at symmetrical positions within the homologous arms, yielding a 5'-phosphate and a 3'-hydroxyl group; requires a central core of homology in the junction. The consensus cleavage sequence is 5'-(A/T)TT(C/G)-3'. Cleavage occurs on the 3'-side of the TT dinucleotide at the point of strand exchange. HJ branch migration catalyzed by RuvA-RuvB allows RuvC to scan DNA until it finds its consensus sequence, where it cleaves and resolves the cruciform DNA. The sequence is that of Crossover junction endodeoxyribonuclease RuvC from Neisseria gonorrhoeae (strain ATCC 700825 / FA 1090).